A 262-amino-acid chain; its full sequence is 26 kDa secreted antigen (262 aa).

Positions 1–21 are cleaved as a signal peptide; it reads MSVVHKACLIALLFVSSGVAQ. ShKT domains lie at 23–57 and 59–93; these read CMDSASDCAANAGSCFTRPVSQVLQNRCQRTCNTC and CRDEANNCAASINLCQNPTFEPLVRDRCQKTCGLC. 6 disulfide bridges follow: cysteine 23-cysteine 57, cysteine 30-cysteine 50, cysteine 37-cysteine 54, cysteine 59-cysteine 93, cysteine 66-cysteine 86, and cysteine 73-cysteine 90.

The protein belongs to the phosphatidylethanolamine-binding protein family.

Its subcellular location is the secreted. Its function is as follows. Binds phosphatidylethanolamine. This is 26 kDa secreted antigen (TES-26) from Toxocara canis (Canine roundworm).